Here is a 431-residue protein sequence, read N- to C-terminus: Intraflagellar transport protein 38 (431 aa).

Positions 177–218 form a coiled coil; that stretch reads SAAVQQRIKNLAAECNTLQEEVTTNKREKAKLEEQITQKKQS. The interval 346–431 is disordered; sequence INTNAEIPDD…EELDPDNIEF (86 aa). Residues 352 to 370 show a composition bias toward acidic residues; that stretch reads IPDDESYSYSYEEEEEEEQ. A compositionally biased stretch (basic and acidic residues) spans 384 to 405; that stretch reads PETHSNGEKHRGLDELSHKSNE. A compositionally biased stretch (acidic residues) spans 420–431; the sequence is GGEELDPDNIEF.

The protein belongs to the CLUAP1 family.

It is found in the cell projection. It localises to the cilium. The protein localises to the flagellum. Its subcellular location is the cytoplasm. The protein resides in the cytoskeleton. It is found in the flagellum axoneme. It localises to the flagellum basal body. In terms of biological role, component of the intraflagellar transport complex B (IFT-B) involved in flagellar assembly. This chain is Intraflagellar transport protein 38, found in Giardia intestinalis (strain ATCC 50803 / WB clone C6) (Giardia lamblia).